Reading from the N-terminus, the 461-residue chain is Isthmin-1 (461 aa).

An N-terminal signal peptide occupies residues 1-26; the sequence is MVRLAAELLLLLGLLLLTLHITVLRS. N-linked (GlcNAc...) asparagine glycosylation occurs at Asn-33. Over residues 40–58 the composition is skewed to polar residues; that stretch reads QDSRVAENNVNADSSSSVQ. 3 disordered regions span residues 40–62, 73–92, and 128–188; these read QDSRVAENNVNADSSSSVQLGPG, ASQPWAQSPGTGGSLQRDGP, and EGSE…NFLK. Positions 131-141 are enriched in basic and acidic residues; sequence EPEKGMRKENK. The span at 156-165 shows a compositional bias: low complexity; that stretch reads SSSSSSSSVS. Residues 215–259 form the TSP type-1 domain; sequence DGEGDWSAWSPCSVSCGNGNQKRTRSCGYACTATESRTCDMPSCP. Intrachain disulfides connect Cys-226/Cys-253, Cys-230/Cys-258, and Cys-241/Cys-245. Asn-282 carries N-linked (GlcNAc...) asparagine glycosylation. In terms of domain architecture, AMOP spans 286 to 449; sequence LFGVDTDSCE…QKCAENPQDE (164 aa).

It belongs to the isthmin family.

It localises to the secreted. In terms of biological role, may specifically influence certain angiogenesis process. In Danio rerio (Zebrafish), this protein is Isthmin-1 (ism1).